A 137-amino-acid chain; its full sequence is MTETTITTSDNVEKYGEREIRDAQLITFPNPRPGRRYDVHITLPEFTCKCPFSGYPDFATLYLTYCPDQKVVELKSIKLYINSYRDRHIPHEEVTNQILDDFVAVANPLYARLKADFNPRGNVHTVIEVEYHQEKAS.

Cys50 acts as the Thioimide intermediate in catalysis. The active-site Proton donor is the Asp57. Residues Val72 to Leu74 and His91 to Glu92 contribute to the substrate site.

Belongs to the GTP cyclohydrolase I family. QueF type 1 subfamily.

It is found in the cytoplasm. The enzyme catalyses 7-aminomethyl-7-carbaguanine + 2 NADP(+) = 7-cyano-7-deazaguanine + 2 NADPH + 3 H(+). Its pathway is tRNA modification; tRNA-queuosine biosynthesis. Its function is as follows. Catalyzes the NADPH-dependent reduction of 7-cyano-7-deazaguanine (preQ0) to 7-aminomethyl-7-deazaguanine (preQ1). The protein is NADPH-dependent 7-cyano-7-deazaguanine reductase of Synechocystis sp. (strain ATCC 27184 / PCC 6803 / Kazusa).